We begin with the raw amino-acid sequence, 257 residues long: Phycoerythrobilin:ferredoxin oxidoreductase (257 aa).

This sequence belongs to the HY2 family.

The catalysed reaction is (3Z)-phycoerythrobilin + oxidized 2[4Fe-4S]-[ferredoxin] = 15,16-dihydrobiliverdin + reduced 2[4Fe-4S]-[ferredoxin] + 2 H(+). Catalyzes the two-electron reduction of the C2 and C3(1) diene system of 15,16-dihydrobiliverdin. This chain is Phycoerythrobilin:ferredoxin oxidoreductase (pebB), found in Prochlorococcus marinus (strain SARG / CCMP1375 / SS120).